A 318-amino-acid chain; its full sequence is HPr kinase/phosphorylase (318 aa).

Catalysis depends on residues His-141 and Lys-162. 156–163 (GDSAMGKS) is an ATP binding site. A Mg(2+)-binding site is contributed by Ser-163. Asp-180 functions as the Proton acceptor; for phosphorylation activity. Proton donor; for dephosphorylation activity in the catalytic mechanism. The tract at residues 204–213 (LEVRGLGILN) is important for the catalytic mechanism of both phosphorylation and dephosphorylation. Glu-205 contributes to the Mg(2+) binding site. Arg-248 is an active-site residue. Residues 269–274 (PVAAGR) form an important for the catalytic mechanism of dephosphorylation region.

It belongs to the HPrK/P family. In terms of assembly, homohexamer. It depends on Mg(2+) as a cofactor.

The catalysed reaction is [HPr protein]-L-serine + ATP = [HPr protein]-O-phospho-L-serine + ADP + H(+). It catalyses the reaction [HPr protein]-O-phospho-L-serine + phosphate + H(+) = [HPr protein]-L-serine + diphosphate. In terms of biological role, catalyzes the ATP- as well as the pyrophosphate-dependent phosphorylation of a specific serine residue in HPr, a phosphocarrier protein of the phosphoenolpyruvate-dependent sugar phosphotransferase system (PTS). HprK/P also catalyzes the pyrophosphate-producing, inorganic phosphate-dependent dephosphorylation (phosphorolysis) of seryl-phosphorylated HPr (P-Ser-HPr). This chain is HPr kinase/phosphorylase, found in Chromobacterium violaceum (strain ATCC 12472 / DSM 30191 / JCM 1249 / CCUG 213 / NBRC 12614 / NCIMB 9131 / NCTC 9757 / MK).